The following is a 253-amino-acid chain: 3-dehydroquinate dehydratase (253 aa).

Residues glutamate 46 to arginine 48 and arginine 82 each bind 3-dehydroquinate. Histidine 143 (proton donor/acceptor) is an active-site residue. Lysine 170 functions as the Schiff-base intermediate with substrate in the catalytic mechanism. The 3-dehydroquinate site is built by arginine 213, serine 232, and glutamine 236.

The protein belongs to the type-I 3-dehydroquinase family. As to quaternary structure, homodimer.

The catalysed reaction is 3-dehydroquinate = 3-dehydroshikimate + H2O. The protein operates within metabolic intermediate biosynthesis; chorismate biosynthesis; chorismate from D-erythrose 4-phosphate and phosphoenolpyruvate: step 3/7. Functionally, involved in the third step of the chorismate pathway, which leads to the biosynthesis of aromatic amino acids. Catalyzes the cis-dehydration of 3-dehydroquinate (DHQ) and introduces the first double bond of the aromatic ring to yield 3-dehydroshikimate. This chain is 3-dehydroquinate dehydratase, found in Bacillus velezensis (strain DSM 23117 / BGSC 10A6 / LMG 26770 / FZB42) (Bacillus amyloliquefaciens subsp. plantarum).